Reading from the N-terminus, the 122-residue chain is NADPH-dependent 7-cyano-7-deazaguanine reductase (122 aa).

Catalysis depends on Cys-34, which acts as the Thioimide intermediate. Asp-41 functions as the Proton donor in the catalytic mechanism. Substrate-binding positions include 56–58 (VEL) and 75–76 (HE).

Belongs to the GTP cyclohydrolase I family. QueF type 1 subfamily.

It is found in the cytoplasm. It catalyses the reaction 7-aminomethyl-7-carbaguanine + 2 NADP(+) = 7-cyano-7-deazaguanine + 2 NADPH + 3 H(+). It participates in tRNA modification; tRNA-queuosine biosynthesis. Catalyzes the NADPH-dependent reduction of 7-cyano-7-deazaguanine (preQ0) to 7-aminomethyl-7-deazaguanine (preQ1). In Anaeromyxobacter dehalogenans (strain 2CP-C), this protein is NADPH-dependent 7-cyano-7-deazaguanine reductase.